A 369-amino-acid chain; its full sequence is Chanoclavine-I aldehyde reductase fgaOx3 (369 aa).

FMN is bound by residues 23–25, A58, Q100, and H169; that span reads PMT. Substrate contacts are provided by H169 and N172. Y174 functions as the Proton donor in the catalytic mechanism. Residues G292, 316-317, and R317 each bind FMN; that span reads GR. Position 344 (Y344) interacts with substrate.

This sequence belongs to the NADH:flavin oxidoreductase/NADH oxidase family. Monomer. Requires FMN as cofactor.

It carries out the reaction dihydrochanoclavine-I aldehyde + NADP(+) = chanoclavine-I aldehyde + NADPH + H(+). Its pathway is alkaloid biosynthesis; ergot alkaloid biosynthesis. Its function is as follows. Chanoclavine-I aldehyde reductase; part of the gene cluster that mediates the biosynthesis of isofumigaclavines, fungal ergot alkaloids. The tryptophan dimethylallyltransferase ifgA catalyzes the first step of ergot alkaloid biosynthesis by condensing dimethylallyl diphosphate (DMAP) and tryptophan to form 4-dimethylallyl-L-tryptophan. The second step is catalyzed by the methyltransferase ifgB that methylates 4-dimethylallyl-L-tryptophan in the presence of S-adenosyl-L-methionine, resulting in the formation of N-methyl-dimethylallyl-L-tryptophan. The catalase ifgD and the FAD-dependent oxidoreductase ifgC then transform N-methyl-dimethylallyl-L-tryptophan to chanoclavine-I which is further oxidized by ifgE in the presence of NAD(+), resulting in the formation of chanoclavine-I aldehyde. The chanoclavine-I aldehyde reductases ifgG and/or fgaOx3 reduce chanoclavine-I aldehyde to dihydrochanoclavine-I aldehyde that spontaneously dehydrates to form 6,8-dimethyl-6,7-didehydroergoline. The festuclavine dehydrogenases ifgF1 and/or ifgF2 then catalyze the reduction of 6,8-dimethyl-6,7-didehydroergoline to form festuclavine. Hydrolysis of festuclavine by a yet undetermined cytochrome P450 monooxygenase (called ifgH) then leads to the formation of isofumigaclavine B which is in turn acetylated by ifgI to isofumigaclavine A. Penicillium roqueforti has interestingly at least two sets of genes for the consumption of chanoclavine-I aldehyde on three different loci, the OYEs ifgG/fgaOx3 and the festuclavine synthase homologs ifgF1/ifgF2. The reason for the duplication of these genes is unclear, probably to ensure the conversion of chanoclavine-I aldehyde by differential gene expression under various environmental conditions. This is Chanoclavine-I aldehyde reductase fgaOx3 from Penicillium roqueforti (strain FM164).